We begin with the raw amino-acid sequence, 152 residues long: SsrA-binding protein (152 aa).

This sequence belongs to the SmpB family.

It is found in the cytoplasm. Its function is as follows. Required for rescue of stalled ribosomes mediated by trans-translation. Binds to transfer-messenger RNA (tmRNA), required for stable association of tmRNA with ribosomes. tmRNA and SmpB together mimic tRNA shape, replacing the anticodon stem-loop with SmpB. tmRNA is encoded by the ssrA gene; the 2 termini fold to resemble tRNA(Ala) and it encodes a 'tag peptide', a short internal open reading frame. During trans-translation Ala-aminoacylated tmRNA acts like a tRNA, entering the A-site of stalled ribosomes, displacing the stalled mRNA. The ribosome then switches to translate the ORF on the tmRNA; the nascent peptide is terminated with the 'tag peptide' encoded by the tmRNA and targeted for degradation. The ribosome is freed to recommence translation, which seems to be the essential function of trans-translation. This Helicobacter pylori (strain Shi470) protein is SsrA-binding protein.